Consider the following 77-residue polypeptide: Acyl carrier protein (77 aa).

Residues 1–76 enclose the Carrier domain; that stretch reads MDREQRIKEI…DVINYLNEKL (76 aa). At serine 36 the chain carries O-(pantetheine 4'-phosphoryl)serine.

It belongs to the acyl carrier protein (ACP) family. In terms of processing, 4'-phosphopantetheine is transferred from CoA to a specific serine of apo-ACP by AcpS. This modification is essential for activity because fatty acids are bound in thioester linkage to the sulfhydryl of the prosthetic group.

It is found in the cytoplasm. It functions in the pathway lipid metabolism; fatty acid biosynthesis. Carrier of the growing fatty acid chain in fatty acid biosynthesis. This is Acyl carrier protein from Hydrogenobaculum sp. (strain Y04AAS1).